The following is a 308-amino-acid chain: MSAQKPGLHPRNRHHSRYDLATLCQVNPELKQFLTLTPAGEQSVDFANPLAVKALNKALLAHFYAVANWDIPDGFLCPPVPGRADYIHHLADLLAEASGTIPARASILDIGVGANCIYPLIGVHEYGWRFTGSETSSQALSSAQAIISANPGLNRAIRLRRQKESGAIFNGIIHKNEQYDATLCNPPFHDSAAAARAGSERKRRNLGLNKDDALNFGGQQQELWCEGGEVTFIKKMIEESKGFAKQVMWFTSLVSRGENLPPLYRALTDVGAVKVVKKEMAQGQKQSRFIAWTFMNDEQRRRFVNRQR.

Belongs to the methyltransferase superfamily. METTL16/RlmF family.

The protein localises to the cytoplasm. It catalyses the reaction adenosine(1618) in 23S rRNA + S-adenosyl-L-methionine = N(6)-methyladenosine(1618) in 23S rRNA + S-adenosyl-L-homocysteine + H(+). Specifically methylates the adenine in position 1618 of 23S rRNA. This is Ribosomal RNA large subunit methyltransferase F from Escherichia fergusonii (strain ATCC 35469 / DSM 13698 / CCUG 18766 / IAM 14443 / JCM 21226 / LMG 7866 / NBRC 102419 / NCTC 12128 / CDC 0568-73).